The following is a 194-amino-acid chain: Fe/S biogenesis protein NfuA (194 aa).

[4Fe-4S] cluster is bound by residues Cys152 and Cys155.

This sequence belongs to the NfuA family. As to quaternary structure, homodimer. It depends on [4Fe-4S] cluster as a cofactor.

Functionally, involved in iron-sulfur cluster biogenesis. Binds a 4Fe-4S cluster, can transfer this cluster to apoproteins, and thereby intervenes in the maturation of Fe/S proteins. Could also act as a scaffold/chaperone for damaged Fe/S proteins. This Azotobacter vinelandii (strain DJ / ATCC BAA-1303) protein is Fe/S biogenesis protein NfuA.